A 424-amino-acid polypeptide reads, in one-letter code: Insertion element IS2A uncharacterized 48.2 kDa protein (424 aa).

Positions 229 to 412 constitute an Integrase catalytic domain; sequence KPAVPPSKRA…SPREYLRHGA (184 aa).

Belongs to the transposase 8 family.

The protein is Insertion element IS2A uncharacterized 48.2 kDa protein of Escherichia coli.